The primary structure comprises 864 residues: DNA mismatch repair protein MutS (864 aa).

Position 623–630 (623–630 (GPNMGGKS)) interacts with ATP.

Belongs to the DNA mismatch repair MutS family.

Functionally, this protein is involved in the repair of mismatches in DNA. It is possible that it carries out the mismatch recognition step. This protein has a weak ATPase activity. In Polaromonas sp. (strain JS666 / ATCC BAA-500), this protein is DNA mismatch repair protein MutS.